Here is a 447-residue protein sequence, read N- to C-terminus: Phosphoglucosamine mutase (447 aa).

Residue Ser100 is the Phosphoserine intermediate of the active site. Mg(2+) contacts are provided by Ser100, Asp240, Asp242, and Asp244. Ser100 bears the Phosphoserine mark.

The protein belongs to the phosphohexose mutase family. Requires Mg(2+) as cofactor. In terms of processing, activated by phosphorylation.

It catalyses the reaction alpha-D-glucosamine 1-phosphate = D-glucosamine 6-phosphate. Functionally, catalyzes the conversion of glucosamine-6-phosphate to glucosamine-1-phosphate. This chain is Phosphoglucosamine mutase, found in Anoxybacillus flavithermus (strain DSM 21510 / WK1).